Consider the following 575-residue polypeptide: Transcription factor COE2 (575 aa).

Residues 62-65 (RKSN) are interaction with DNA. Residues 150–169 (CRVLLTHEVMCSRCCEKKSC) form a C5-type zinc finger. 2 interaction with DNA regions span residues 196–203 (NCLKTAGN) and 235–238 (NNSK). One can recognise an IPT/TIG domain in the interval 253–336 (PCIKAISPSE…KGAPGRFIYT (84 aa)). The span at 441–453 (STQGNNQGYIRNT) shows a compositional bias: polar residues. The interval 441 to 479 (STQGNNQGYIRNTSSISPRGYSSSSTPQQSNYSTSSNSM) is disordered. Low complexity predominate over residues 454–479 (SSISPRGYSSSSTPQQSNYSTSSNSM).

It belongs to the COE family. In terms of assembly, forms either a homodimer or a heterodimer with a related family member. Interacts with SIX1.

The protein resides in the nucleus. Its function is as follows. Transcription factor that, in osteoblasts, activates the decoy receptor for RANKL, TNFRSF11B, which in turn regulates osteoclast differentiation. Acts in synergy with the Wnt-responsive LEF1/CTNNB1 pathway. Recognizes variations of the palindromic sequence 5'-ATTCCCNNGGGAATT-3'. The protein is Transcription factor COE2 (EBF2) of Bos taurus (Bovine).